A 182-amino-acid chain; its full sequence is CASP-like protein 5B1 (182 aa).

Positions 1-20 (GDASHAVDHPIGGHPEHEHD) are disordered. At 1 to 41 (GDASHAVDHPIGGHPEHEHDLREEEGPLIFPMKDLPGTPGT) the chain is on the cytoplasmic side. The helical transmembrane segment at 42 to 62 (VGGLALRMGQFIFAAASVVIM) threads the bilayer. Over 63 to 73 (VTSDEFINFTA) the chain is Extracellular. A glycan (N-linked (GlcNAc...) asparagine) is linked at Asn70. The helical transmembrane segment at 74-94 (FCYLAAAMALQFLWSFVLATI) threads the bilayer. At 95–108 (DVYALLIKRGLPNS) the chain is on the cytoplasmic side. Residues 109–129 (ILLSLFVVGDWVTATLSLAAA) traverse the membrane as a helical segment. At 130-159 (CSTAGITVLFDKDLNYCDQMHCRRYQLSAT) the chain is on the extracellular side. Residues 160–180 (MAFFSWVLIAISSLITLLLLV) form a helical membrane-spanning segment. Over 181 to 182 (SE) the chain is Cytoplasmic.

The protein belongs to the Casparian strip membrane proteins (CASP) family. Homodimer and heterodimers.

It is found in the cell membrane. The protein is CASP-like protein 5B1 of Picea sitchensis (Sitka spruce).